Here is a 203-residue protein sequence, read N- to C-terminus: Probable chemoreceptor glutamine deamidase CheD (203 aa).

Belongs to the CheD family.

It catalyses the reaction L-glutaminyl-[protein] + H2O = L-glutamyl-[protein] + NH4(+). Functionally, probably deamidates glutamine residues to glutamate on methyl-accepting chemotaxis receptors (MCPs), playing an important role in chemotaxis. In Herminiimonas arsenicoxydans, this protein is Probable chemoreceptor glutamine deamidase CheD.